The sequence spans 221 residues: GTP cyclohydrolase III (221 aa).

Belongs to the archaeal-type GTP cyclohydrolase family.

The enzyme catalyses GTP + 3 H2O = 2-amino-5-formylamino-6-(5-phospho-D-ribosylamino)pyrimidin-4(3H)-one + 2 phosphate + 2 H(+). Functionally, catalyzes the formation of 2-amino-5-formylamino-6-ribofuranosylamino-4(3H)-pyrimidinone ribonucleotide monophosphate and inorganic phosphate from GTP. Also has an independent pyrophosphate phosphohydrolase activity. The protein is GTP cyclohydrolase III of Pyrobaculum neutrophilum (strain DSM 2338 / JCM 9278 / NBRC 100436 / V24Sta) (Thermoproteus neutrophilus).